The primary structure comprises 502 residues: Alpha-ketoglutarate-dependent dioxygenase FTO (502 aa).

Positions 32 to 324 (TPKDDEFYQQ…SSTHRVAECS (293 aa)) are fe2OG dioxygenase domain. Substrate-binding residues include Arg-96 and Tyr-108. Residue Asn-202 participates in 2-oxoglutarate binding. Residues 210–221 (PYLKEEPYFGMG) form a loop L1; predicted to block binding of double-stranded DNA or RNA region. Residue Lys-213 is modified to N6-acetyllysine. Positions 228 and 230 each coordinate Fe cation. 228 to 231 (HHDE) lines the substrate pocket. Tyr-292 is a binding site for 2-oxoglutarate. Fe cation is bound at residue His-304. 2-oxoglutarate contacts are provided by residues 313 to 315 (RFS), Thr-317, and Arg-319.

It belongs to the fto family. In terms of assembly, monomer. May also exist as homodimer. The cofactor is Fe(2+). Ubiquitous. Detected in brain, brain cortex, hypothalamus, cerebellum, liver, pancreas, heart, kidney, white adipose tissue and skeletal muscle. Most abundant in the brain, particularly in hypothalamic nuclei governing energy balance.

The protein resides in the nucleus. It localises to the nucleus speckle. The protein localises to the cytoplasm. It carries out the reaction a 5'-end (N(7)-methyl 5'-triphosphoguanosine)-(N(6),2'-O-dimethyladenosine) in mRNA + 2-oxoglutarate + O2 = a 5'-end (N(7)-methyl 5'-triphosphoguanosine)-(2'-O-methyladenosine) in mRNA + formaldehyde + succinate + CO2. The enzyme catalyses an N(6)-methyladenosine in mRNA + 2-oxoglutarate + O2 = an adenosine in mRNA + formaldehyde + succinate + CO2. The catalysed reaction is N(6)-methyladenosine in U6 snRNA + 2-oxoglutarate + O2 = adenosine in U6 snRNA + formaldehyde + succinate + CO2. It catalyses the reaction a 5'-end (N(7)-methyl 5'-triphosphoguanosine)-(N(6),2'-O-dimethyladenosine) in U6 snRNA + 2-oxoglutarate + O2 = a 5'-end (N(7)-methyl 5'-triphosphoguanosine)-(2'-O-methyladenosine) in U6 snRNA + formaldehyde + succinate + CO2. It carries out the reaction an N(1)-methyladenosine in tRNA + 2-oxoglutarate + O2 = an adenosine in tRNA + formaldehyde + succinate + CO2. Activated by ascorbate. Inhibited by N-oxalylglycine, fumarate and succinate. RNA demethylase that mediates oxidative demethylation of different RNA species, such as mRNAs, tRNAs and snRNAs, and acts as a regulator of fat mass, adipogenesis and energy homeostasis. Specifically demethylates N(6)-methyladenosine (m6A) RNA, the most prevalent internal modification of messenger RNA (mRNA) in higher eukaryotes. M6A demethylation by FTO affects mRNA expression and stability. Also able to demethylate m6A in U6 small nuclear RNA (snRNA). Mediates demethylation of N(6),2'-O-dimethyladenosine cap (m6A(m)), by demethylating the N(6)-methyladenosine at the second transcribed position of mRNAs and U6 snRNA. Demethylation of m6A(m) in the 5'-cap by FTO affects mRNA stability by promoting susceptibility to decapping. Also acts as a tRNA demethylase by removing N(1)-methyladenine from various tRNAs. Has no activity towards 1-methylguanine. Has no detectable activity towards double-stranded DNA. Also able to repair alkylated DNA and RNA by oxidative demethylation: demethylates single-stranded RNA containing 3-methyluracil, single-stranded DNA containing 3-methylthymine and has low demethylase activity towards single-stranded DNA containing 1-methyladenine or 3-methylcytosine. Ability to repair alkylated DNA and RNA is however unsure in vivo. Involved in the regulation of fat mass, adipogenesis and body weight, thereby contributing to the regulation of body size and body fat accumulation. Involved in the regulation of thermogenesis and the control of adipocyte differentiation into brown or white fat cells. Regulates activity of the dopaminergic midbrain circuitry via its ability to demethylate m6A in mRNAs. This chain is Alpha-ketoglutarate-dependent dioxygenase FTO, found in Mus musculus (Mouse).